Reading from the N-terminus, the 457-residue chain is Siroheme synthase (457 aa).

A precorrin-2 dehydrogenase /sirohydrochlorin ferrochelatase region spans residues 1–204; sequence MDHLPIFCQL…NDQKAITETT (204 aa). Residues 22–23 and 43–44 contribute to the NAD(+) site; these read DV and LA. At Ser128 the chain carries Phosphoserine. The tract at residues 216–457 is uroporphyrinogen-III C-methyltransferase; sequence GEVVLVGAGP…RDKLNWFSNH (242 aa). An S-adenosyl-L-methionine-binding site is contributed by Pro225. The active-site Proton acceptor is the Asp248. Lys270 functions as the Proton donor in the catalytic mechanism. Residues 301-303, Ile306, 331-332, Met382, and Gly411 contribute to the S-adenosyl-L-methionine site; these read GGD and TA.

It in the N-terminal section; belongs to the precorrin-2 dehydrogenase / sirohydrochlorin ferrochelatase family. In the C-terminal section; belongs to the precorrin methyltransferase family.

The catalysed reaction is uroporphyrinogen III + 2 S-adenosyl-L-methionine = precorrin-2 + 2 S-adenosyl-L-homocysteine + H(+). It catalyses the reaction precorrin-2 + NAD(+) = sirohydrochlorin + NADH + 2 H(+). It carries out the reaction siroheme + 2 H(+) = sirohydrochlorin + Fe(2+). Its pathway is cofactor biosynthesis; adenosylcobalamin biosynthesis; precorrin-2 from uroporphyrinogen III: step 1/1. It functions in the pathway cofactor biosynthesis; adenosylcobalamin biosynthesis; sirohydrochlorin from precorrin-2: step 1/1. The protein operates within porphyrin-containing compound metabolism; siroheme biosynthesis; precorrin-2 from uroporphyrinogen III: step 1/1. It participates in porphyrin-containing compound metabolism; siroheme biosynthesis; siroheme from sirohydrochlorin: step 1/1. Its pathway is porphyrin-containing compound metabolism; siroheme biosynthesis; sirohydrochlorin from precorrin-2: step 1/1. In terms of biological role, multifunctional enzyme that catalyzes the SAM-dependent methylations of uroporphyrinogen III at position C-2 and C-7 to form precorrin-2 via precorrin-1. Then it catalyzes the NAD-dependent ring dehydrogenation of precorrin-2 to yield sirohydrochlorin. Finally, it catalyzes the ferrochelation of sirohydrochlorin to yield siroheme. This Escherichia coli O45:K1 (strain S88 / ExPEC) protein is Siroheme synthase.